We begin with the raw amino-acid sequence, 272 residues long: Cell division protein ZipA (272 aa).

Topologically, residues 1–4 are periplasmic; the sequence is METH. The chain crosses the membrane as a helical span at residues 5-25; sequence ILFFILAGLLIAVLIGYSIWS. Topologically, residues 26 to 272 are cytoplasmic; sequence ARREKSRIFS…RQNYLLRVAN (247 aa).

The protein belongs to the ZipA family. In terms of assembly, interacts with FtsZ via their C-terminal domains.

The protein resides in the cell inner membrane. Essential cell division protein that stabilizes the FtsZ protofilaments by cross-linking them and that serves as a cytoplasmic membrane anchor for the Z ring. Also required for the recruitment to the septal ring of downstream cell division proteins. This is Cell division protein ZipA from Glaesserella parasuis serovar 5 (strain SH0165) (Haemophilus parasuis).